Reading from the N-terminus, the 314-residue chain is tRNA dimethylallyltransferase (314 aa).

Position 11–18 (11–18) interacts with ATP; the sequence is GPTAVGKT. 13-18 lines the substrate pocket; that stretch reads TAVGKT. The interval 36 to 39 is interaction with substrate tRNA; that stretch reads DSMQ.

This sequence belongs to the IPP transferase family. Monomer. Mg(2+) is required as a cofactor.

The catalysed reaction is adenosine(37) in tRNA + dimethylallyl diphosphate = N(6)-dimethylallyladenosine(37) in tRNA + diphosphate. In terms of biological role, catalyzes the transfer of a dimethylallyl group onto the adenine at position 37 in tRNAs that read codons beginning with uridine, leading to the formation of N6-(dimethylallyl)adenosine (i(6)A). This Bacillus anthracis protein is tRNA dimethylallyltransferase.